Here is a 732-residue protein sequence, read N- to C-terminus: Prolyl endopeptidase-like (732 aa).

Active-site charge relay system residues include Ser575, Asp661, and His707.

It belongs to the peptidase S9A family. Homodimer.

Its subcellular location is the cytoplasm. It localises to the cytosol. In terms of biological role, serine peptidase whose precise substrate specificity remains unclear. Does not cleave peptides after a arginine or lysine residue. Regulates trans-Golgi network morphology and sorting by regulating the membrane binding of the AP-1 complex. May play a role in the regulation of synaptic vesicle exocytosis. The chain is Prolyl endopeptidase-like (PREPL) from Gallus gallus (Chicken).